The chain runs to 353 residues: Photosystem II D2 protein (353 aa).

Threonine 2 carries the post-translational modification N-acetylthreonine. Threonine 2 bears the Phosphothreonine mark. Residues 41-61 (CAYFALGGWFTGTTFVTSWYT) form a helical membrane-spanning segment. Chlorophyll a is bound at residue histidine 118. The chain crosses the membrane as a helical span at residues 125–141 (GFMLRQFELSRSVQLRP). The pheophytin a site is built by glutamine 130 and asparagine 143. A helical transmembrane segment spans residues 153 to 166 (VFVSVFLIYPLGQS). Histidine 198 serves as a coordination point for chlorophyll a. A helical membrane pass occupies residues 208 to 228 (AALLCAIHGATVENTLFEDGD). The a plastoquinone site is built by histidine 215 and phenylalanine 262. Residue histidine 215 coordinates Fe cation. Histidine 269 contacts Fe cation. Residues 279–295 (GLWMSALGVVGLALNLR) traverse the membrane as a helical segment.

Belongs to the reaction center PufL/M/PsbA/D family. In terms of assembly, PSII is composed of 1 copy each of membrane proteins PsbA, PsbB, PsbC, PsbD, PsbE, PsbF, PsbH, PsbI, PsbJ, PsbK, PsbL, PsbM, PsbT, PsbX, PsbY, PsbZ, Psb30/Ycf12, at least 3 peripheral proteins of the oxygen-evolving complex and a large number of cofactors. It forms dimeric complexes. It depends on The D1/D2 heterodimer binds P680, chlorophylls that are the primary electron donor of PSII, and subsequent electron acceptors. It shares a non-heme iron and each subunit binds pheophytin, quinone, additional chlorophylls, carotenoids and lipids. There is also a Cl(-1) ion associated with D1 and D2, which is required for oxygen evolution. The PSII complex binds additional chlorophylls, carotenoids and specific lipids. as a cofactor.

Its subcellular location is the plastid. The protein localises to the chloroplast thylakoid membrane. It carries out the reaction 2 a plastoquinone + 4 hnu + 2 H2O = 2 a plastoquinol + O2. Photosystem II (PSII) is a light-driven water:plastoquinone oxidoreductase that uses light energy to abstract electrons from H(2)O, generating O(2) and a proton gradient subsequently used for ATP formation. It consists of a core antenna complex that captures photons, and an electron transfer chain that converts photonic excitation into a charge separation. The D1/D2 (PsbA/PsbD) reaction center heterodimer binds P680, the primary electron donor of PSII as well as several subsequent electron acceptors. D2 is needed for assembly of a stable PSII complex. The protein is Photosystem II D2 protein of Arabis hirsuta (Hairy rock-cress).